A 76-amino-acid chain; its full sequence is Small ribosomal subunit protein bS18 (76 aa).

It belongs to the bacterial ribosomal protein bS18 family. Part of the 30S ribosomal subunit. Forms a tight heterodimer with protein bS6.

In terms of biological role, binds as a heterodimer with protein bS6 to the central domain of the 16S rRNA, where it helps stabilize the platform of the 30S subunit. This chain is Small ribosomal subunit protein bS18, found in Xanthomonas campestris pv. campestris (strain 8004).